The chain runs to 718 residues: Coiled-coil domain-containing protein 157 (718 aa).

Residues 300–603 (LRAQLEDAEG…LTKIREVAQQ (304 aa)) are a coiled coil. A compositionally biased stretch (basic and acidic residues) spans 469–482 (RGSLDEAEAQRSEL). Disordered regions lie at residues 469 to 490 (RGSL…QSLQ) and 617 to 690 (PPYK…TQNP). The segment covering 639 to 659 (TGRRQSPGSRTSSTGRTHPGG) has biased composition (low complexity).

The chain is Coiled-coil domain-containing protein 157 (Ccdc157) from Mus musculus (Mouse).